The chain runs to 48 residues: uncharacterized protein (48 aa).

This is an uncharacterized protein from Mus musculus domesticus (western European house mouse).